The following is a 346-amino-acid chain: Senescence-specific cysteine protease SAG12 (346 aa).

An N-terminal signal peptide occupies residues M1 to S25. An N-linked (GlcNAc...) asparagine glycan is attached at N124. 3 cysteine pairs are disulfide-bonded: C151–C192, C185–C225, and C283–C335. The active site involves C154. The active site involves H289. An N-linked (GlcNAc...) asparagine glycan is attached at N301. The active site involves N310.

This sequence belongs to the peptidase C1 family. In terms of tissue distribution, found in senescent leaves, especially in senescence-associated vacuoles- (SAVs) containing cells (e.g. mesophyll and guard cells), and in senescencing ovules of unfertilised pistils.

The protein resides in the vacuole. Cysteine protease that may have a developmental senescence specific cell death function during apoptosis, heavy metal detoxification, and hypersensitive response. This is Senescence-specific cysteine protease SAG12 from Arabidopsis thaliana (Mouse-ear cress).